A 1648-amino-acid polypeptide reads, in one-letter code: Pleiotropic ABC efflux transporter of multiple drugs YBT1 (1648 aa).

The chain crosses the membrane as a helical span at residues 28-48 (NYVPTTLVTISILILLHNFFI). Asn-72 is a glycosylation site (N-linked (GlcNAc...) asparagine). The next 4 membrane-spanning stretches (helical) occupy residues 140–160 (VVIEFVIVAFQLLLHCYLSIE), 175–195 (PHVLLWTILFTLATLRVLNLN), 207–227 (NIWLVSFANYTVIFLAHILPF), and 250–270 (LNLVLMALLLTSPIGNNLPVL). Asn-306 carries an N-linked (GlcNAc...) asparagine glycan. The next 2 helical transmembrane spans lie at 352-372 (FLNLFMFQWCFTTISAFSIFV) and 392-412 (MNLAWFYVFGMFISRFIVAIC). The region spanning 361-674 (CFTTISAFSI…ISDMLSYLIQ (314 aa)) is the ABC transmembrane type-1 1 domain. Asn-471 carries N-linked (GlcNAc...) asparagine glycosylation. Helical transmembrane passes span 501 to 521 (ISELCAYLHYFLETAIMLTVS) and 523 to 543 (ILLYKVIGTAAFVGILITIII). Asn-573 carries N-linked (GlcNAc...) asparagine glycosylation. A run of 2 helical transmembrane segments spans residues 612–632 (VWCVLAFSWFITPTLITGCTF) and 643–662 (LTTPVAFTALSLFTLLRDPL). One can recognise an ABC transporter 1 domain in the interval 706 to 947 (LAFENVTLRW…GLLGEDENMK (242 aa)). The N-linked (GlcNAc...) asparagine glycan is linked to Asn-710. 741-748 (GATGSGKT) lines the ATP pocket. 2 N-linked (GlcNAc...) asparagine glycosylation sites follow: Asn-784 and Asn-798. A helical membrane pass occupies residues 1012–1032 (MYGGWYTIVALASVFTAILCL). The ABC transmembrane type-1 2 domain occupies 1032 to 1333 (LQITQAWWIR…LVRQYSELEM (302 aa)). N-linked (GlcNAc...) asparagine glycosylation is present at Asn-1042. A run of 3 helical transmembrane segments spans residues 1089-1109 (IAKFLVVYCLIGVMSSIIGSI), 1168-1188 (IQSVFYSAIEVFATLLLISYI), and 1191-1211 (AFFPVAIIIVLGYSIVGFFYL). N-linked (GlcNAc...) asparagine glycosylation occurs at Asn-1255. The next 2 helical transmembrane spans lie at 1282 to 1302 (LIGALVIFSSGVFILLNINNI) and 1305 to 1325 (GLAGISLTYAISFTEAALWLV). An ABC transporter 2 domain is found at 1372-1622 (VEVNNLSLKY…KKSIFYNMCE (251 aa)). Residue Asn-1376 is glycosylated (N-linked (GlcNAc...) asparagine). 1406–1413 (GRTGAGKS) serves as a coordination point for ATP. N-linked (GlcNAc...) asparagine glycosylation is found at Asn-1503, Asn-1524, and Asn-1573.

Belongs to the ABC transporter superfamily. ABCC family. Conjugate transporter (TC 3.A.1.208) subfamily.

The protein resides in the membrane. Its function is as follows. Pleiotropic ABC efflux transporter that might be involved in the resistance to azoles such as fluconazole. The protein is Pleiotropic ABC efflux transporter of multiple drugs YBT1 of Candida glabrata (strain ATCC 2001 / BCRC 20586 / JCM 3761 / NBRC 0622 / NRRL Y-65 / CBS 138) (Yeast).